An 896-amino-acid polypeptide reads, in one-letter code: Translation initiation factor IF-2 (896 aa).

Disordered stretches follow at residues 32–99 (LAQA…TALP) and 117–304 (EITS…KQAE). Residues 35–48 (AGSSDTKNSPASKA) are compositionally biased toward polar residues. Basic and acidic residues predominate over residues 153-169 (TPERIEETPIIRTRTEP). Positions 203–214 (AASTEETTQQQP) are enriched in low complexity. Polar residues predominate over residues 215–227 (RQNDAASHNNKQQ). Over residues 228-241 (PSGTSSRPASSAPS) the composition is skewed to low complexity. The span at 256–280 (RGSERDRSKRSDESVKAFTGRDRYG) shows a compositional bias: basic and acidic residues. Residues 401–570 (IRSPIVAFMG…ALQAEVLELK (170 aa)) form the tr-type G domain. A G1 region spans residues 410 to 417 (GHVDHGKT). 410-417 (GHVDHGKT) is a binding site for GTP. Residues 435–439 (AITQH) form a G2 region. The G3 stretch occupies residues 456–459 (DTPG). Residues 456–460 (DTPGH) and 510–513 (NKCD) contribute to the GTP site. The G4 stretch occupies residues 510-513 (NKCD). A G5 region spans residues 546–548 (SAK).

This sequence belongs to the TRAFAC class translation factor GTPase superfamily. Classic translation factor GTPase family. IF-2 subfamily.

It is found in the cytoplasm. In terms of biological role, one of the essential components for the initiation of protein synthesis. Protects formylmethionyl-tRNA from spontaneous hydrolysis and promotes its binding to the 30S ribosomal subunits. Also involved in the hydrolysis of GTP during the formation of the 70S ribosomal complex. This is Translation initiation factor IF-2 from Chlamydia trachomatis serovar L2 (strain ATCC VR-902B / DSM 19102 / 434/Bu).